The primary structure comprises 226 residues: Lipoprotein-releasing system ATP-binding protein LolD (226 aa).

In terms of domain architecture, ABC transporter spans 5-226 (LRCEKISKFY…MADGVLREAS (222 aa)). 41–48 (GSSGSGKS) contributes to the ATP binding site.

It belongs to the ABC transporter superfamily. Lipoprotein translocase (TC 3.A.1.125) family. The complex is composed of two ATP-binding proteins (LolD) and two transmembrane proteins (LolC and LolE).

It is found in the cell inner membrane. Functionally, part of the ABC transporter complex LolCDE involved in the translocation of mature outer membrane-directed lipoproteins, from the inner membrane to the periplasmic chaperone, LolA. Responsible for the formation of the LolA-lipoprotein complex in an ATP-dependent manner. This chain is Lipoprotein-releasing system ATP-binding protein LolD, found in Haemophilus ducreyi (strain 35000HP / ATCC 700724).